Consider the following 116-residue polypeptide: Ribosome-binding factor A (116 aa).

Belongs to the RbfA family. As to quaternary structure, monomer. Binds 30S ribosomal subunits, but not 50S ribosomal subunits or 70S ribosomes.

It is found in the cytoplasm. One of several proteins that assist in the late maturation steps of the functional core of the 30S ribosomal subunit. Associates with free 30S ribosomal subunits (but not with 30S subunits that are part of 70S ribosomes or polysomes). Required for efficient processing of 16S rRNA. May interact with the 5'-terminal helix region of 16S rRNA. This is Ribosome-binding factor A from Halalkalibacterium halodurans (strain ATCC BAA-125 / DSM 18197 / FERM 7344 / JCM 9153 / C-125) (Bacillus halodurans).